Reading from the N-terminus, the 305-residue chain is uncharacterized protein (305 aa).

The protein belongs to the ADP-ribosylglycohydrolase family.

This is an uncharacterized protein from Archaeoglobus fulgidus (strain ATCC 49558 / DSM 4304 / JCM 9628 / NBRC 100126 / VC-16).